Reading from the N-terminus, the 323-residue chain is 4-hydroxyphenylpyruvate 3-dimethylallyltransferase (323 aa).

Residues Arg160 and Glu281 each contribute to the substrate site.

This sequence belongs to the aromatic prenyltransferase family. As to quaternary structure, monomer.

It is found in the cytoplasm. The enzyme catalyses 3-(4-hydroxyphenyl)pyruvate + dimethylallyl diphosphate = 3-dimethylallyl-4-hydroxyphenylpyruvate + diphosphate. It functions in the pathway antibiotic biosynthesis; novobiocin biosynthesis. Its function is as follows. Magnesium-independent aromatic prenyltransferase that catalyzes the irreversible transfer of a dimethylallyl group to 4-hydroxyphenylpyruvate to produce the ring A structure in the novobiocin biosynthesis pathway. Novobiocin is an aminocoumarin family antibiotic that targets bacterial DNA gyrases. It is able to prenylate many different compounds, including the phenylpropanoids 4-coumarate and caffeate, the plant polyketide resveratrol, the (iso)flavonoid naringenin, apigenin, daidzein and genistein, and the dihydroxynaphthalenes 1,6-DHN and 2,7-DHN. This chain is 4-hydroxyphenylpyruvate 3-dimethylallyltransferase, found in Streptomyces niveus (Streptomyces spheroides).